The sequence spans 127 residues: Small ribosomal subunit protein bS6 (127 aa).

The segment at 101–127 (PMMKEEKARDLLQGAKADAPAEQPAAA) is disordered. Low complexity predominate over residues 115 to 127 (AKADAPAEQPAAA).

It belongs to the bacterial ribosomal protein bS6 family.

In terms of biological role, binds together with bS18 to 16S ribosomal RNA. This chain is Small ribosomal subunit protein bS6, found in Thiobacillus denitrificans (strain ATCC 25259 / T1).